A 287-amino-acid chain; its full sequence is MEGIIVINKPKGITSFDVIRKLKKFLKTKKIGHTGTLDPLAIGVMLVCVGKATKLASDLEAKDKVYIADFDIGYATDTYDIEGKKIAENIIEVSKENLEQSLKKFIGNIKQVPPMYSAIKIDGNKLYHLARKGIEVERPERDITIEYINLLDFKDNKAKIETKVSKGCYIRSLIYDIGQDLGTYATMTALQRKQVGEYSLENSYSLEQIEEMTLNNNFKFLKTIEEIFSYDKYNLQTEKEFILYKNGNTVKIKENLENKKYRIYFQDEFIGLANIENNNLLKGYKYY.

Aspartate 38 acts as the Nucleophile in catalysis.

Belongs to the pseudouridine synthase TruB family. Type 1 subfamily.

It catalyses the reaction uridine(55) in tRNA = pseudouridine(55) in tRNA. Its function is as follows. Responsible for synthesis of pseudouridine from uracil-55 in the psi GC loop of transfer RNAs. The protein is tRNA pseudouridine synthase B of Fusobacterium nucleatum subsp. nucleatum (strain ATCC 25586 / DSM 15643 / BCRC 10681 / CIP 101130 / JCM 8532 / KCTC 2640 / LMG 13131 / VPI 4355).